Here is a 418-residue protein sequence, read N- to C-terminus: AP-3 complex subunit mu-1 (418 aa).

The MHD domain occupies 176–417 (NNEAYFDVVE…VTKAGKFQVR (242 aa)).

The protein belongs to the adaptor complexes medium subunit family. Adaptor protein complex 3 (AP-3) is a heterotetramer composed of two large adaptins (delta-type subunit AP3D1 and beta-type subunit AP3B1 or AP3B2), a medium adaptin (mu-type subunit AP3M1 or AP3M2) and a small adaptin (sigma-type subunit APS1 or AP3S2). Interacts with AGAP1. AP-3 associates with the BLOC-1 complex.

The protein localises to the golgi apparatus. It localises to the cytoplasmic vesicle membrane. Functionally, part of the AP-3 complex, an adaptor-related complex which is not clathrin-associated. The complex is associated with the Golgi region as well as more peripheral structures. It facilitates the budding of vesicles from the Golgi membrane and may be directly involved in trafficking to lysosomes. In concert with the BLOC-1 complex, AP-3 is required to target cargos into vesicles assembled at cell bodies for delivery into neurites and nerve terminals. This Bos taurus (Bovine) protein is AP-3 complex subunit mu-1 (AP3M1).